The primary structure comprises 83 residues: Small ribosomal subunit protein bS20 (83 aa).

The protein belongs to the bacterial ribosomal protein bS20 family.

Binds directly to 16S ribosomal RNA. The sequence is that of Small ribosomal subunit protein bS20 from Staphylococcus aureus (strain JH1).